A 258-amino-acid polypeptide reads, in one-letter code: Oxidoreductase fscI (258 aa).

Positions 34, 59, 82, 109, and 141 each coordinate NADP(+). Catalysis depends on serine 163, which acts as the Proton donor. Position 193 (arginine 193) interacts with NADP(+).

The protein belongs to the short-chain dehydrogenases/reductases (SDR) family.

The protein operates within secondary metabolite biosynthesis. Oxidoreductase; part of the fragmented gene cluster that mediates the biosynthesis of fusarochromene, a tryptophan-derived metabolite closely related to a group of mycotoxins including fusarochromanone. Within the pathway, fscI catalyzes the formation of the chromene ring from the prenyl moity added by the prenyltransferase fscG. The first step of the pathway is the epimerization of L-tryptophan to D-tryptophan in the presence of the NRPS-like tryptophan epimerase fscC. D-tryptophan is subsequently hydroxylated by the tryptophan 6-hydroxylase fscE to yield 6-hydroxytryptophan. The pyrrole ring undergoes cleavaged by the tryptophan 2,3-dioxygenase fscD and is finally converted to 4-hydroxykyrunenine by the hydrolase fscH. The NRPS-like oxidoreductase fscA reduces the carboxyl group to primary alcohol and the DMATS-type prenyltransferase fscG performs prenylation, followed by the formation of a chromene ring catalyzed by the oxidoreductase fscI, which leads to desacetylfusarochromene. Epoxidation by fscF and rearrangement reactions of chromene double bonds convert compound desacetylfusarochromene to fusarochromanones. Although specific acetyltransferases were not found near the fsc gene cluster, several predicted enzymes containing the N-acetyltransferase superfamily domain are present in the genome of F.equiseti. These predicted enzymes may have the potential to convert desacetylfusarochromene to fusarochromene. This is Oxidoreductase fscI from Fusarium equiseti (Fusarium scirpi).